The chain runs to 327 residues: Cobalamin biosynthesis protein CobD (327 aa).

4 consecutive transmembrane segments (helical) span residues 60-80 (GMWLTIGLVMACVVLGLVLEL), 82-102 (LPFAGTAGAVAEILIVTVLLA), 159-179 (DGIVAPAFWFLVGGLPGLFAY), and 304-324 (LFWSTMSLMTGLVIAASLIGL).

It belongs to the CobD/CbiB family.

The protein localises to the cell membrane. Its pathway is cofactor biosynthesis; adenosylcobalamin biosynthesis. Functionally, converts cobyric acid to cobinamide by the addition of aminopropanol on the F carboxylic group. The sequence is that of Cobalamin biosynthesis protein CobD from Brucella anthropi (strain ATCC 49188 / DSM 6882 / CCUG 24695 / JCM 21032 / LMG 3331 / NBRC 15819 / NCTC 12168 / Alc 37) (Ochrobactrum anthropi).